Consider the following 253-residue polypeptide: Indole-3-glycerol phosphate synthase (253 aa).

The protein belongs to the TrpC family.

The catalysed reaction is 1-(2-carboxyphenylamino)-1-deoxy-D-ribulose 5-phosphate + H(+) = (1S,2R)-1-C-(indol-3-yl)glycerol 3-phosphate + CO2 + H2O. It functions in the pathway amino-acid biosynthesis; L-tryptophan biosynthesis; L-tryptophan from chorismate: step 4/5. In Bacillus thuringiensis subsp. konkukian (strain 97-27), this protein is Indole-3-glycerol phosphate synthase.